Consider the following 169-residue polypeptide: uncharacterized protein (169 aa).

Residues 1–91 (MFSSTFRRLA…NKEQYTVRCL (91 aa)) constitute a mitochondrion transit peptide. The segment at 54–76 (PQPKSPGSLPSSTRTAPNPNGEE) is disordered. Positions 61–71 (SLPSSTRTAPN) are enriched in polar residues.

It localises to the mitochondrion. This is an uncharacterized protein from Trypanosoma brucei brucei (strain 927/4 GUTat10.1).